Here is a 362-residue protein sequence, read N- to C-terminus: Putative lipoprotein YdaJ (362 aa).

The N-terminal stretch at 1-20 (MRHVLIAVILFFLSIGLSAG) is a signal peptide. Cysteine 21 is lipidated: N-palmitoyl cysteine. The S-diacylglycerol cysteine moiety is linked to residue cysteine 21.

The protein resides in the cell membrane. The polypeptide is Putative lipoprotein YdaJ (ydaJ) (Bacillus subtilis (strain 168)).